Here is a 99-residue protein sequence, read N- to C-terminus: UPF0125 protein BU253 (99 aa).

Belongs to the UPF0125 (RnfH) family.

The polypeptide is UPF0125 protein BU253 (Buchnera aphidicola subsp. Acyrthosiphon pisum (strain APS) (Acyrthosiphon pisum symbiotic bacterium)).